The following is a 464-amino-acid chain: Protein FAM90A1 (464 aa).

Disordered regions lie at residues 1 to 43, 71 to 294, 312 to 386, 412 to 437, and 445 to 464; these read MMAR…PRLK, PNFG…KRSA, PFQI…AASH, PSFHSPEKPGAFLAQSPHVSEKSEGP, and VLYEDLQVPSSSEDSDSDLE. 2 stretches are compositionally biased toward basic and acidic residues: residues 74–83 and 97–114; these read GEKEGKENLK and NKDKGEKEERPRPQDPQR. The segment covering 180-197 has biased composition (low complexity); that stretch reads LASLSPLRKASLSSSSSL. Polar residues predominate over residues 344 to 355; that stretch reads TSPQTGTRTPAQ.

The protein belongs to the FAM90 family.

This is Protein FAM90A1 (FAM90A1) from Homo sapiens (Human).